The sequence spans 175 residues: NADH-ubiquinone oxidoreductase chain 6 (175 aa).

6 consecutive transmembrane segments (helical) span residues 1–21, 25–45, 51–71, 87–107, 112–132, and 148–168; these read MMYIVFIMSVLYVVGFIGFSS, PVYGGMSLVVSGGLGCGIIMG, LGLVVFLVYLGGMMVVFGYTI, VVLGAFLVGLLMEVFMIMWLF, ELVGFYFGGLEDLMVLGEGGF, and YGFWFLAMAGWMLFVSIFIAI.

The protein belongs to the complex I subunit 6 family. In terms of assembly, core subunit of respiratory chain NADH dehydrogenase (Complex I) which is composed of 45 different subunits.

Its subcellular location is the mitochondrion inner membrane. The catalysed reaction is a ubiquinone + NADH + 5 H(+)(in) = a ubiquinol + NAD(+) + 4 H(+)(out). Its function is as follows. Core subunit of the mitochondrial membrane respiratory chain NADH dehydrogenase (Complex I) which catalyzes electron transfer from NADH through the respiratory chain, using ubiquinone as an electron acceptor. Essential for the catalytic activity and assembly of complex I. The protein is NADH-ubiquinone oxidoreductase chain 6 (MT-ND6) of Loxodonta africana (African elephant).